The sequence spans 502 residues: Xylulose kinase (502 aa).

Residue 82–83 (MH) participates in substrate binding. The Proton acceptor role is filled by Asp-240.

It belongs to the FGGY kinase family.

The catalysed reaction is D-xylulose + ATP = D-xylulose 5-phosphate + ADP + H(+). Functionally, catalyzes the phosphorylation of D-xylulose to D-xylulose 5-phosphate. This chain is Xylulose kinase, found in Levilactobacillus brevis (Lactobacillus brevis).